A 342-amino-acid chain; its full sequence is Anthranilate phosphoribosyltransferase (342 aa).

5-phospho-alpha-D-ribose 1-diphosphate is bound by residues G81, 84–85 (GD), 91–94 (NVSS), 109–117 (KHGNRGVSS), and S121. G81 contacts anthranilate. A Mg(2+)-binding site is contributed by S93. Residue N112 coordinates anthranilate. R167 contributes to the anthranilate binding site. Residues D226 and E227 each contribute to the Mg(2+) site.

This sequence belongs to the anthranilate phosphoribosyltransferase family. In terms of assembly, homodimer. The cofactor is Mg(2+).

It catalyses the reaction N-(5-phospho-beta-D-ribosyl)anthranilate + diphosphate = 5-phospho-alpha-D-ribose 1-diphosphate + anthranilate. It functions in the pathway amino-acid biosynthesis; L-tryptophan biosynthesis; L-tryptophan from chorismate: step 2/5. Its function is as follows. Catalyzes the transfer of the phosphoribosyl group of 5-phosphorylribose-1-pyrophosphate (PRPP) to anthranilate to yield N-(5'-phosphoribosyl)-anthranilate (PRA). The chain is Anthranilate phosphoribosyltransferase from Marinobacter nauticus (strain ATCC 700491 / DSM 11845 / VT8) (Marinobacter aquaeolei).